A 123-amino-acid polypeptide reads, in one-letter code: Large ribosomal subunit protein bL12 (123 aa).

It belongs to the bacterial ribosomal protein bL12 family. As to quaternary structure, homodimer. Part of the ribosomal stalk of the 50S ribosomal subunit. Forms a multimeric L10(L12)X complex, where L10 forms an elongated spine to which 2 to 4 L12 dimers bind in a sequential fashion. Binds GTP-bound translation factors.

In terms of biological role, forms part of the ribosomal stalk which helps the ribosome interact with GTP-bound translation factors. Is thus essential for accurate translation. The polypeptide is Large ribosomal subunit protein bL12 (Chlorobium luteolum (strain DSM 273 / BCRC 81028 / 2530) (Pelodictyon luteolum)).